A 176-amino-acid chain; its full sequence is Ribosome maturation factor RimM (176 aa).

A PRC barrel domain is found at 93-172 (EGEFFYFDVL…EILTKDAKSI (80 aa)).

This sequence belongs to the RimM family. Binds ribosomal protein uS19.

The protein resides in the cytoplasm. Functionally, an accessory protein needed during the final step in the assembly of 30S ribosomal subunit, possibly for assembly of the head region. Essential for efficient processing of 16S rRNA. May be needed both before and after RbfA during the maturation of 16S rRNA. It has affinity for free ribosomal 30S subunits but not for 70S ribosomes. This Campylobacter curvus (strain 525.92) protein is Ribosome maturation factor RimM.